A 231-amino-acid chain; its full sequence is NADH-ubiquinone oxidoreductase chain 4 (231 aa).

7 helical membrane passes run 1 to 21 (PIAG…YGII), 34 to 54 (LFLP…LTCL), 63 to 85 (IAYS…TPWG), 89 to 111 (AMAL…NTTY), 128 to 148 (ILPM…AIPP), 156 to 176 (LLIM…LGLS), and 211 to 231 (LLIA…ELVI).

It belongs to the complex I subunit 4 family.

The protein localises to the mitochondrion membrane. It carries out the reaction a ubiquinone + NADH + 5 H(+)(in) = a ubiquinol + NAD(+) + 4 H(+)(out). Functionally, core subunit of the mitochondrial membrane respiratory chain NADH dehydrogenase (Complex I) that is believed to belong to the minimal assembly required for catalysis. Complex I functions in the transfer of electrons from NADH to the respiratory chain. The immediate electron acceptor for the enzyme is believed to be ubiquinone. The sequence is that of NADH-ubiquinone oxidoreductase chain 4 (MT-ND4) from Crotalus adamanteus (Eastern diamondback rattlesnake).